A 287-amino-acid chain; its full sequence is ATP synthase gamma chain (287 aa).

This sequence belongs to the ATPase gamma chain family. F-type ATPases have 2 components, CF(1) - the catalytic core - and CF(0) - the membrane proton channel. CF(1) has five subunits: alpha(3), beta(3), gamma(1), delta(1), epsilon(1). CF(0) has three main subunits: a, b and c.

Its subcellular location is the cell inner membrane. Its function is as follows. Produces ATP from ADP in the presence of a proton gradient across the membrane. The gamma chain is believed to be important in regulating ATPase activity and the flow of protons through the CF(0) complex. This is ATP synthase gamma chain from Methylococcus capsulatus (strain ATCC 33009 / NCIMB 11132 / Bath).